The sequence spans 249 residues: Vesicle-associated membrane protein-associated protein A (249 aa).

Alanine 2 carries the N-acetylalanine modification. Over 2–227 the chain is Cytoplasmic; sequence ASASGAMAKH…ASFRDNVTSP (226 aa). In terms of domain architecture, MSP spans 14-131; it reads ILVLDPPTDL…MDSKLRCVFE (118 aa). The tract at residues 50–53 is phosphorylated FFAT motif binding; that stretch reads KVKT. Lysine 125 bears the N6-acetyllysine mark. Residues 135–144 show a composition bias toward basic and acidic residues; the sequence is ENDKLNDMEP. Positions 135-167 are disordered; it reads ENDKLNDMEPSKAVPLNASKQDGPMPKPHSVSL. The residue at position 166 (serine 166) is a Phosphoserine. The stretch at 169-205 forms a coiled coil; it reads DTETRKLMEECKRLQGEMMKLSEENRHLRDEGLRLRK. Threonine 170 carries the phosphothreonine modification. A phosphoserine mark is found at serine 214, serine 216, and serine 219. Residues 228 to 248 traverse the membrane as a helical; Anchor for type IV membrane protein segment; it reads LPSLLVVIAAIFIGFFLGKFI.

This sequence belongs to the VAMP-associated protein (VAP) (TC 9.B.17) family. In terms of assembly, homodimer; disulfide-linked. Heterodimer with VAPB. Interacts with VAMP1, VAMP2, STX1A, BET1, SEC22C and with the C-terminal domain of OCLN. Interacts (via MSP domain) with OSBPL1A (via FFAT motif). Interacts (via MSP domain) with ZFYVE27; may retain ZFYVE27 in the endoplasmic reticulum and regulate its function in cell projections formation. Interacts with OSBP. Interacts (via C-terminus) with RSAD2/viperin (via C-terminus). Interacts with IFITM3. Interacts with OSBPL3 (phosphorylated form). Interacts with KIF5A in a ZFYVE27-dependent manner. Interacts (via MSP domain) with STARD3 (via phosphorylated FFAT motif); this interaction recruits VAPA to the endosome. Interacts with STARD3NL (via FFAT motif). Interacts with CERT1. Interacts with PLEKHA3 and SACM1L to form a ternary complex. Interacts with VPS13A (via FFAT motif). Interacts with RB1CC1 (via phosphorylated FFAT motif), MIGA2 (via phosphorylated FFAT motif), RMDN3 (via phosphorylated FFAT motif), KCNB1 (via phosphorylated FFAT motif) and KCNB2 (via phosphorylated FFAT motif). Interacts (via MSP domain) with WDR44 (via FFAT-like motif); the interactions connect the endoplasmic reticulum (ER) with the endosomal tubule. (Microbial infection) Interacts with HCV protein NS5A and NS5B. In terms of tissue distribution, ubiquitous.

It localises to the endoplasmic reticulum membrane. The protein resides in the cell membrane. Its subcellular location is the cell junction. The protein localises to the tight junction. It is found in the nucleus membrane. Its function is as follows. Endoplasmic reticulum (ER)-anchored protein that mediates the formation of contact sites between the ER and endosomes via interaction with FFAT motif-containing proteins such as STARD3 or WDR44. STARD3-VAPA interaction enables cholesterol transfer from the ER to endosomes. Via interaction with WDR44 participates in neosynthesized protein export. In addition, recruited to the plasma membrane through OSBPL3 binding. The OSBPL3-VAPA complex stimulates RRAS signaling which in turn attenuates integrin beta-1 (ITGB1) activation at the cell surface. With OSBPL3, may regulate ER morphology. May play a role in vesicle trafficking. The protein is Vesicle-associated membrane protein-associated protein A of Homo sapiens (Human).